We begin with the raw amino-acid sequence, 255 residues long: Uracil-DNA glycosylase (255 aa).

Residues 1–20 are disordered; sequence MFSASTTPEQPLGLSGDATP. Asp-99 serves as the catalytic Proton acceptor.

It belongs to the uracil-DNA glycosylase (UDG) superfamily. UNG family.

The protein localises to the host nucleus. It catalyses the reaction Hydrolyzes single-stranded DNA or mismatched double-stranded DNA and polynucleotides, releasing free uracil.. Its function is as follows. Excises uracil residues from the DNA which can arise as a result of misincorporation of dUMP residues by DNA polymerase or deamination of cytosines. Therefore may reduce deleterious uracil incorporation into the viral genome, particularly in terminally differentiated cells which lack DNA repair enzymes. This is Uracil-DNA glycosylase from Human herpesvirus 2 (strain HG52) (HHV-2).